The following is a 1235-amino-acid chain: DNA polymerase catalytic subunit (1235 aa).

Disordered regions lie at residues 640-692 (QGRF…TAGR) and 1098-1134 (AAAP…ASKP). The span at 650–661 (APKRPAAAREDE) shows a compositional bias: basic and acidic residues. The segment covering 662 to 675 (ERPEEEGEDEDERE) has biased composition (acidic residues). Positions 676 to 691 (EGGGEREPEGARETAG) are enriched in basic and acidic residues.

This sequence belongs to the DNA polymerase type-B family. In terms of assembly, forms a complex with the ssDNA-binding protein UL29, the DNA polymerase processivity factor, and the alkaline exonuclease. Interacts with the putative helicase-primase complex subunit UL8; this interaction may coordinate leading and lagging strand DNA synthesis at the replication fork.

It is found in the host nucleus. The enzyme catalyses DNA(n) + a 2'-deoxyribonucleoside 5'-triphosphate = DNA(n+1) + diphosphate. The catalysed reaction is Endonucleolytic cleavage to 5'-phosphomonoester.. Its function is as follows. Replicates viral genomic DNA. The replication complex is composed of six viral proteins: the DNA polymerase, processivity factor, primase, primase-associated factor, helicase, and ssDNA-binding protein. Additionally, the polymerase contains an intrinsic ribonuclease H (RNase H) activity that specifically degrades RNA/DNA heteroduplexes or duplex DNA substrates in the 5' to 3' direction. Therefore, it can catalyze the excision of the RNA primers that initiate the synthesis of Okazaki fragments at a replication fork during viral DNA replication. The protein is DNA polymerase catalytic subunit of Homo sapiens (Human).